The chain runs to 464 residues: Glutamate--tRNA ligase (464 aa).

Residues 9–19 (PSPTGYLHIGG) carry the 'HIGH' region motif. The short motif at 242–246 (KISKR) is the 'KMSKS' region element. Lys-245 contributes to the ATP binding site.

The protein belongs to the class-I aminoacyl-tRNA synthetase family. Glutamate--tRNA ligase type 1 subfamily. As to quaternary structure, monomer.

The protein resides in the cytoplasm. The enzyme catalyses tRNA(Glu) + L-glutamate + ATP = L-glutamyl-tRNA(Glu) + AMP + diphosphate. Functionally, catalyzes the attachment of glutamate to tRNA(Glu) in a two-step reaction: glutamate is first activated by ATP to form Glu-AMP and then transferred to the acceptor end of tRNA(Glu). In Neisseria gonorrhoeae (strain NCCP11945), this protein is Glutamate--tRNA ligase.